A 274-amino-acid polypeptide reads, in one-letter code: Bis(5'-nucleosyl)-tetraphosphatase, symmetrical (274 aa).

The protein belongs to the Ap4A hydrolase family.

The enzyme catalyses P(1),P(4)-bis(5'-adenosyl) tetraphosphate + H2O = 2 ADP + 2 H(+). Functionally, hydrolyzes diadenosine 5',5'''-P1,P4-tetraphosphate to yield ADP. This chain is Bis(5'-nucleosyl)-tetraphosphatase, symmetrical, found in Shewanella putrefaciens (strain CN-32 / ATCC BAA-453).